The primary structure comprises 184 residues: Peptidyl-tRNA hydrolase (184 aa).

Tyr14 lines the tRNA pocket. The active-site Proton acceptor is the His19. Residues Phe64, Asn66, and Asn112 each contribute to the tRNA site.

Belongs to the PTH family. In terms of assembly, monomer.

Its subcellular location is the cytoplasm. The enzyme catalyses an N-acyl-L-alpha-aminoacyl-tRNA + H2O = an N-acyl-L-amino acid + a tRNA + H(+). Functionally, hydrolyzes ribosome-free peptidyl-tRNAs (with 1 or more amino acids incorporated), which drop off the ribosome during protein synthesis, or as a result of ribosome stalling. In terms of biological role, catalyzes the release of premature peptidyl moieties from peptidyl-tRNA molecules trapped in stalled 50S ribosomal subunits, and thus maintains levels of free tRNAs and 50S ribosomes. The sequence is that of Peptidyl-tRNA hydrolase from Thermoanaerobacter sp. (strain X514).